The following is a 147-amino-acid chain: MVHFTAEEKVAITSLWSKMNVEEAGGEALGRLLVVYPWTQRFFDNFGNLSSPSAILGNPKVKAHGKKVLTSFGDAIKNMDNLKTTFAKLSELHCDKLHVDPENFRLLGNVMVIILATHFGKEFTPEVQAAWQKLVSAVAIALGHKYH.

The Globin domain maps to 3–147 (HFTAEEKVAI…VAIALGHKYH (145 aa)). Residues Ser14 and Ser51 each carry the phosphoserine modification. 2 residues coordinate heme b: His64 and His93.

The protein belongs to the globin family. In terms of assembly, heterotetramer of two alpha chains and two epsilon chains in early embryonic hemoglobin Gower-2; two zeta chains and two epsilon chains in early embryonic hemoglobin Gower-1. In terms of tissue distribution, red blood cells.

Its function is as follows. The epsilon chain is a beta-type chain of early mammalian embryonic hemoglobin. This is Hemoglobin subunit epsilon (HBE1) from Cebus kaapori (Ka'apor capuchin).